Reading from the N-terminus, the 260-residue chain is Kallikrein-8 (260 aa).

The first 28 residues, 1–28 (MGRPPPCAIQTWILLFLLMGAWAGLTRA), serve as a signal peptide directing secretion. A propeptide spanning residues 29–32 (QGSK) is cleaved from the precursor. Residues 33 to 257 (ILEGQECKPH…YTNWIKKTMG (225 aa)) enclose the Peptidase S1 domain. Cystine bridges form between Cys-39–Cys-173, Cys-58–Cys-74, Cys-145–Cys-246, Cys-152–Cys-218, Cys-184–Cys-198, and Cys-208–Cys-233. Catalysis depends on His-73, which acts as the Charge relay system. Asn-110 carries an N-linked (GlcNAc...) asparagine glycan. Asp-120 functions as the Charge relay system in the catalytic mechanism. Catalysis depends on Ser-212, which acts as the Charge relay system.

This sequence belongs to the peptidase S1 family. Kallikrein subfamily. In terms of assembly, interacts with SPINK9. As to expression, restricted to hippocampus.

The protein localises to the secreted. It localises to the cytoplasm. The catalysed reaction is Cleavage of amide substrates following the basic amino acids Arg or Lys at the P1 position, with a preference for Arg over Lys.. Serine protease which is capable of degrading a number of proteins such as casein, fibrinogen, kininogen, fibronectin and collagen type IV. Also cleaves L1CAM in response to increased neural activity. Induces neurite outgrowth and fasciculation of cultured hippocampal neurons. Plays a role in the formation and maturation of orphan and small synaptic boutons in the Schaffer-collateral pathway, regulates Schaffer-collateral long-term potentiation in the hippocampus and is required for memory acquisition and synaptic plasticity. Involved in skin desquamation and keratinocyte proliferation. Plays a role in the secondary phase of pathogenesis following spinal cord injury. In Rattus norvegicus (Rat), this protein is Kallikrein-8 (Klk8).